Consider the following 173-residue polypeptide: C-phycocyanin beta subunit (173 aa).

Asn-73 carries the N4-methylasparagine modification. Residues Cys-83 and Cys-154 each contribute to the (2R,3E)-phycocyanobilin site.

Belongs to the phycobiliprotein family. In terms of assembly, heterodimer of an alpha and a beta subunit. Heterodimers further assemble into trimers and the trimers into hexamers. Contains two covalently linked bilin chromophores.

It localises to the cellular thylakoid membrane. In terms of biological role, light-harvesting photosynthetic bile pigment-protein from the phycobiliprotein complex (phycobilisome, PBS). Phycocyanin is the major phycobiliprotein in the PBS rod. The protein is C-phycocyanin beta subunit (cpcB) of Mastigocladus laminosus (Fischerella sp.).